A 178-amino-acid polypeptide reads, in one-letter code: Cysteine protease inhibitor 7 (178 aa).

Disulfide bonds link C41-C93 and C141-C147.

The protein belongs to the protease inhibitor I3 (leguminous Kunitz-type inhibitor) family.

It localises to the vacuole. Inhibitor of cysteine proteases. May protect the plant by inhibiting proteases of invading organisms. This is Cysteine protease inhibitor 7 from Solanum tuberosum (Potato).